We begin with the raw amino-acid sequence, 203 residues long: Small ribosomal subunit protein uS4c (203 aa).

Residues 19-43 form a disordered region; it reads PGLTNKSPKAGSDLRKQPRSRKKSQ. The S4 RNA-binding domain occupies 89–152; sequence MRLDNILFRL…KSRTLIQNSL (64 aa).

This sequence belongs to the universal ribosomal protein uS4 family. In terms of assembly, part of the 30S ribosomal subunit. Contacts protein S5. The interaction surface between S4 and S5 is involved in control of translational fidelity.

It localises to the plastid. The protein localises to the chloroplast. In terms of biological role, one of the primary rRNA binding proteins, it binds directly to 16S rRNA where it nucleates assembly of the body of the 30S subunit. With S5 and S12 plays an important role in translational accuracy. The protein is Small ribosomal subunit protein uS4c (rps4) of Jasminum nudiflorum (Winter jasmine).